Reading from the N-terminus, the 250-residue chain is uncharacterized protein (250 aa).

Residues 4–24 (FKYLLFLVVFAVFFLTFAFFD) form a helical membrane-spanning segment.

The protein resides in the membrane. This is an uncharacterized protein from Methanocaldococcus jannaschii (strain ATCC 43067 / DSM 2661 / JAL-1 / JCM 10045 / NBRC 100440) (Methanococcus jannaschii).